We begin with the raw amino-acid sequence, 68 residues long: Small ribosomal subunit protein bS18c (68 aa).

Belongs to the bacterial ribosomal protein bS18 family. Part of the 30S ribosomal subunit.

Its subcellular location is the plastid. It localises to the chloroplast. This Cyanidium caldarium (Red alga) protein is Small ribosomal subunit protein bS18c (rps18).